Here is a 558-residue protein sequence, read N- to C-terminus: Atlastin-1 (558 aa).

Positions 1 to 28 (MAKNRRDRNSWGGFSEKTYEWSSEEEEP) are disordered. The segment at 1 to 34 (MAKNRRDRNSWGGFSEKTYEWSSEEEEPVKKAGP) is N-terminal hypervariable region (HVR). The Cytoplasmic portion of the chain corresponds to 1–449 (MAKNRRDRNS…NIFHAARTPA (449 aa)). Phosphoserine occurs at positions 10, 22, and 23. A GB1/RHD3-type G domain is found at 64–309 (DKEVVAVSVA…LIPWLLSPES (246 aa)). The GDP site is built by Arg77, Lys78, Gly79, Lys80, Ser81, Phe82, Gln148, Arg217, Asp218, Val276, and Asn279. Residues Arg77, Lys78, Gly79, Lys80, Ser81, and Phe82 each contribute to the GTP site. Residue Ser81 participates in Mg(2+) binding. Residues Arg217, Asp218, and Val276 each coordinate GTP. The segment at 347–438 (MLQATAEANN…YIQYIKHNDS (92 aa)) is 3HB (three-helix bundle) domain. An N6-acetyllysine modification is found at Lys395. A coiled-coil region spans residues 418 to 439 (LQQLETEIDELYIQYIKHNDSK). The segment at 439–447 (KNIFHAART) is linker. A helical membrane pass occupies residues 450 to 470 (TLFVVIFITYVIAGVTGFIGL). Position 471 (Asp471) is a topological domain, lumenal. Residues 472-492 (IIASLCNMIMGLTLITLCTWA) traverse the membrane as a helical segment. Residues 493–558 (YIRYSGEYRE…STEQSEKKKM (66 aa)) are Cytoplasmic-facing. The tract at residues 521-558 (NEALYKLYSAAATHRHLYHQAFPAPKSESTEQSEKKKM) is autoinhibitory domain.

This sequence belongs to the TRAFAC class dynamin-like GTPase superfamily. GB1/RHD3 GTPase family. GB1 subfamily. As to quaternary structure, monomeric and homodimeric. The homodimer, transiently formed by two molecules on opposing membranes, is the active form mediating ER membrane fusion. Interacts with REEP1, REEP5, RTN3 and RTN4 (via the transmembrane region); these proteins are involved in endoplasmic reticulum tubular network organization. Interacts with ZFYVE27; both proteins are involved in endoplasmic reticulum tubular network organization. Interacts with ARL6IP1; both proteins are involved in endoplasmic reticulum tubular network organization. Interacts with SPAST; the interaction is direct, could recruit SPAST to Golgi membranes. Interacts (via N-terminal region) with MAP4K4 (via CNH regulatory domain). May interact with TMED2. Interacts with CPT1C. In terms of processing, phosphorylated. Phosphorylation, by different kinases, of the N-terminal hypervariable region (HVR) regulates the ATL1-mediated membrane tethering step.

It is found in the endoplasmic reticulum membrane. Its subcellular location is the golgi apparatus membrane. The protein resides in the cell projection. The protein localises to the axon. It catalyses the reaction GTP + H2O = GDP + phosphate + H(+). In terms of biological role, atlastin-1 (ATL1) is a membrane-anchored GTPase that mediates the GTP-dependent fusion of endoplasmic reticulum (ER) membranes, maintaining the continuous ER network. It facilitates the formation of three-way junctions where ER tubules intersect. Two atlastin-1 on neighboring ER tubules bind GTP and form loose homodimers through the GB1/RHD3-type G domains and 3HB regions. Upon GTP hydrolysis, the 3HB regions tighten, pulling the membranes together to drive their fusion. After fusion, the homodimer disassembles upon release of inorganic phosphate (Pi). Subsequently, GDP dissociates, resetting the monomers to a conformation ready for a new fusion cycle. May also regulate more or less directly Golgi biogenesis. Indirectly regulates axonal development. This Bos taurus (Bovine) protein is Atlastin-1.